We begin with the raw amino-acid sequence, 205 residues long: Lymphotoxin-alpha (205 aa).

The first 34 residues, 1–34 (MTPPERLFLPRVRGTTLHLLLLGLLLVLLPGAQG), serve as a signal peptide directing secretion. An O-linked (GalNAc...) threonine glycan is attached at threonine 41. Residues 63–205 (PAAHLIGDPS…STVFFGAFAL (143 aa)) form the THD domain. Asparagine 96 carries an N-linked (GlcNAc...) asparagine glycan.

The protein belongs to the tumor necrosis factor family. Homotrimer, and heterotrimer of either two LTB and one LTA subunits or (less prevalent) two LTA and one LTB subunits. Interacts with TNFRSF14.

The protein localises to the secreted. Its subcellular location is the membrane. Cytokine that in its homotrimeric form binds to TNFRSF1A/TNFR1, TNFRSF1B/TNFBR and TNFRSF14/HVEM. In its heterotrimeric form with LTB binds to TNFRSF3/LTBR. Lymphotoxin is produced by lymphocytes and is cytotoxic for a wide range of tumor cells in vitro and in vivo. The sequence is that of Lymphotoxin-alpha (LTA) from Pan troglodytes (Chimpanzee).